The following is a 237-amino-acid chain: N-(5'-phosphoribosyl)anthranilate isomerase (237 aa).

It belongs to the TrpF family.

It catalyses the reaction N-(5-phospho-beta-D-ribosyl)anthranilate = 1-(2-carboxyphenylamino)-1-deoxy-D-ribulose 5-phosphate. It participates in amino-acid biosynthesis; L-tryptophan biosynthesis; L-tryptophan from chorismate: step 3/5. The chain is N-(5'-phosphoribosyl)anthranilate isomerase from Desulfitobacterium hafniense (strain Y51).